We begin with the raw amino-acid sequence, 820 residues long: MRYDPNLIEKKWQQFWKEHRSFQANEDEDKVKYYVLDMFPYPSGAGLHVGHLIGYTATDIVARYKRARGFSVLHPMGWDSFGLPAEQYAIRTGTHPKVTTQKNIANFKKQLSAMGFSYDEGREFATSDPDYYHWTQKLFLFLYDQGLAYMADMAVNYCPELGTVLSNEEVENGFSIEGGYPVERKMLRQWILKITAYADKLLEGLDALDWPENVKQLQKNWIGKSEGALVTFHLTQEGSLEAFTTRLDTLLGVSFLVIAPEHPDLDSIVSEEQRDEVTAYVQESLRKSERDRISSVKTKTGVFTGNYAKHPITGNLLPVWISDYVVLGYGTGVVMGVPAHDERDREFAEMFSLPIHEVIDDNGVCIHSNYNDFCLNGLSGQEAKDYVINYLEMRSLGRAKTMYRLRDWLFSRQRYWGEPIPIIHFEDGTHRPLEDDELPLLPPNIDDYRPEGFGQGPLAKAQDWVHIYDEKTGRPGCRETYTMPQWAGSCWYYLRFCDAHNSQLPWSKEKESYWMPVDLYIGGAEHAVLHLLYSRFWHRVFYDAGLVSTPEPFKKLINQGLVLASSYRIPGKGYVSIEDVREENGTWISTCGEIVEVRQEKMSKSKLNGVDPQVLIEEYGADALRMYAMFSGPLDKNKTWSNEGVGGCRRFLNRFYDLVTSSEVQDIEDRDGLVLAHKLVFRITEHIEKMSLNTIPSSFMEFLNDFSKLPVYSKRALSMAVRVLEPIAPHISEELWVILGNPPGIDQAAWPQIDESYLVAQTVTFVVQVNGKLRGRLEVAKEAPKEEVLSLSRSVVAKYLENAQIRKEIYVPNKLVNFVL.

The 'HIGH' region motif lies at Pro40 to His51. A 'KMSKS' region motif is present at residues Lys601–Ser605. Lys604 is an ATP binding site.

This sequence belongs to the class-I aminoacyl-tRNA synthetase family.

Its subcellular location is the cytoplasm. The enzyme catalyses tRNA(Leu) + L-leucine + ATP = L-leucyl-tRNA(Leu) + AMP + diphosphate. The chain is Leucine--tRNA ligase from Chlamydia pneumoniae (Chlamydophila pneumoniae).